We begin with the raw amino-acid sequence, 435 residues long: Glutamyl-tRNA reductase (435 aa).

Substrate-binding positions include 49 to 52 (TCNR), Ser-109, 114 to 116 (ETQ), and Gln-120. The Nucleophile role is filled by Cys-50. 189-194 (GAGEMS) lines the NADP(+) pocket.

The protein belongs to the glutamyl-tRNA reductase family. In terms of assembly, homodimer.

It carries out the reaction (S)-4-amino-5-oxopentanoate + tRNA(Glu) + NADP(+) = L-glutamyl-tRNA(Glu) + NADPH + H(+). It participates in porphyrin-containing compound metabolism; protoporphyrin-IX biosynthesis; 5-aminolevulinate from L-glutamyl-tRNA(Glu): step 1/2. Catalyzes the NADPH-dependent reduction of glutamyl-tRNA(Glu) to glutamate 1-semialdehyde (GSA). In Listeria monocytogenes serovar 1/2a (strain ATCC BAA-679 / EGD-e), this protein is Glutamyl-tRNA reductase.